We begin with the raw amino-acid sequence, 385 residues long: uncharacterized protein (385 aa).

This sequence belongs to the mimivirus L17x/L18x family.

This is an uncharacterized protein from Acanthamoeba polyphaga mimivirus (APMV).